The primary structure comprises 296 residues: Pantothenate synthetase (296 aa).

Residue 37-44 (MGALHTGH) coordinates ATP. His-44 acts as the Proton donor in catalysis. Position 68 (Gln-68) interacts with (R)-pantoate. Residue Gln-68 coordinates beta-alanine. 160–163 (GQKD) is a binding site for ATP. Position 166 (Gln-166) interacts with (R)-pantoate. Residues Val-189 and 197–200 (TSSR) contribute to the ATP site.

The protein belongs to the pantothenate synthetase family. In terms of assembly, homodimer.

The protein resides in the cytoplasm. The enzyme catalyses (R)-pantoate + beta-alanine + ATP = (R)-pantothenate + AMP + diphosphate + H(+). It functions in the pathway cofactor biosynthesis; (R)-pantothenate biosynthesis; (R)-pantothenate from (R)-pantoate and beta-alanine: step 1/1. In terms of biological role, catalyzes the condensation of pantoate with beta-alanine in an ATP-dependent reaction via a pantoyl-adenylate intermediate. In Thermobifida fusca (strain YX), this protein is Pantothenate synthetase.